The primary structure comprises 285 residues: Protease HtpX homolog (285 aa).

Transmembrane regions (helical) follow at residues 7–27 (TAML…MIGG) and 30–50 (GMTI…WFSD). Zn(2+) is bound at residue His-131. Residue Glu-132 is part of the active site. His-135 is a Zn(2+) binding site. The next 2 membrane-spanning stretches (helical) occupy residues 146-166 (ISAT…FFGG) and 177-197 (IAGI…QMAI). Glu-202 provides a ligand contact to Zn(2+).

This sequence belongs to the peptidase M48B family. Requires Zn(2+) as cofactor.

The protein resides in the cell inner membrane. This chain is Protease HtpX homolog, found in Burkholderia thailandensis (strain ATCC 700388 / DSM 13276 / CCUG 48851 / CIP 106301 / E264).